Reading from the N-terminus, the 356-residue chain is Magnesium-protoporphyrin IX monomethyl ester [oxidative] cyclase (356 aa).

The protein belongs to the AcsF family. It depends on Fe cation as a cofactor.

It carries out the reaction Mg-protoporphyrin IX 13-monomethyl ester + 3 NADPH + 3 O2 + 2 H(+) = 3,8-divinyl protochlorophyllide a + 3 NADP(+) + 5 H2O. It functions in the pathway porphyrin-containing compound metabolism; chlorophyll biosynthesis (light-independent). In terms of biological role, catalyzes the formation of the isocyclic ring in chlorophyll biosynthesis. Mediates the cyclase reaction, which results in the formation of divinylprotochlorophyllide (Pchlide) characteristic of all chlorophylls from magnesium-protoporphyrin IX 13-monomethyl ester (MgPMME). The sequence is that of Magnesium-protoporphyrin IX monomethyl ester [oxidative] cyclase from Synechococcus sp. (strain CC9605).